The sequence spans 339 residues: NADH-quinone oxidoreductase subunit H (339 aa).

A run of 9 helical transmembrane segments spans residues 10 to 30 (FPLI…ILCV), 50 to 70 (PNVV…KLLF), 82 to 102 (ILFI…WAVV), 115 to 135 (VGVL…IIAG), 161 to 181 (MGLV…SGII), 187 to 207 (IPWW…ISVL), 235 to 255 (MGFA…SAMT), 275 to 295 (IPGF…FLWI), and 310 to 330 (LGWK…SSVL).

Belongs to the complex I subunit 1 family. As to quaternary structure, NDH-1 is composed of 14 different subunits. Subunits NuoA, H, J, K, L, M, N constitute the membrane sector of the complex.

The protein resides in the cell inner membrane. The catalysed reaction is a quinone + NADH + 5 H(+)(in) = a quinol + NAD(+) + 4 H(+)(out). Its function is as follows. NDH-1 shuttles electrons from NADH, via FMN and iron-sulfur (Fe-S) centers, to quinones in the respiratory chain. The immediate electron acceptor for the enzyme in this species is believed to be ubiquinone. Couples the redox reaction to proton translocation (for every two electrons transferred, four hydrogen ions are translocated across the cytoplasmic membrane), and thus conserves the redox energy in a proton gradient. This subunit may bind ubiquinone. The sequence is that of NADH-quinone oxidoreductase subunit H from Rickettsia canadensis (strain McKiel).